The sequence spans 276 residues: Glyoxal reductase (276 aa).

Tyrosine 54 (proton donor) is an active-site residue. A substrate-binding site is contributed by histidine 112. 190–242 provides a ligand contact to NADP(+); the sequence is SPLMQGQLLDNEVLTQIAEKHNKSVAQVILRWDLQHGVVTIPKSIKEHRIIEN.

It belongs to the aldo/keto reductase family.

It carries out the reaction (S)-lactaldehyde + NADP(+) = methylglyoxal + NADPH + H(+). Its function is as follows. Reduces glyoxal and methylglyoxal (2-oxopropanal). Is not involved in the vitamin B6 biosynthesis. The chain is Glyoxal reductase (yvgN) from Bacillus subtilis (strain 168).